The sequence spans 201 residues: Probable cytokinin riboside 5'-monophosphate phosphoribohydrolase LOG6 (201 aa).

Residues Glu89, Arg107–Lys108, Gly124–Glu130, and Thr136 each bind substrate.

It belongs to the LOG family.

It catalyses the reaction N(6)-(dimethylallyl)adenosine 5'-phosphate + H2O = N(6)-dimethylallyladenine + D-ribose 5-phosphate. The catalysed reaction is 9-ribosyl-trans-zeatin 5'-phosphate + H2O = trans-zeatin + D-ribose 5-phosphate. Cytokinin-activating enzyme working in the direct activation pathway. Phosphoribohydrolase that converts inactive cytokinin nucleotides to the biologically active free-base forms. The polypeptide is Probable cytokinin riboside 5'-monophosphate phosphoribohydrolase LOG6 (LOG6) (Arabidopsis thaliana (Mouse-ear cress)).